We begin with the raw amino-acid sequence, 138 residues long: Ribosome-binding factor A (138 aa).

The disordered stretch occupies residues 112–138 (EARTQGQAPAADVEPAPGAAPDDEAEE). Over residues 119-131 (APAADVEPAPGAA) the composition is skewed to low complexity.

It belongs to the RbfA family. Monomer. Binds 30S ribosomal subunits, but not 50S ribosomal subunits or 70S ribosomes.

The protein resides in the cytoplasm. One of several proteins that assist in the late maturation steps of the functional core of the 30S ribosomal subunit. Associates with free 30S ribosomal subunits (but not with 30S subunits that are part of 70S ribosomes or polysomes). Required for efficient processing of 16S rRNA. May interact with the 5'-terminal helix region of 16S rRNA. This chain is Ribosome-binding factor A, found in Anaeromyxobacter sp. (strain K).